The following is a 135-amino-acid chain: ATP synthase epsilon chain (135 aa).

Belongs to the ATPase epsilon chain family. As to quaternary structure, F-type ATPases have 2 components, CF(1) - the catalytic core - and CF(0) - the membrane proton channel. CF(1) has five subunits: alpha(3), beta(3), gamma(1), delta(1), epsilon(1). CF(0) has three main subunits: a, b and c.

The protein localises to the cell inner membrane. Produces ATP from ADP in the presence of a proton gradient across the membrane. This chain is ATP synthase epsilon chain, found in Chelativorans sp. (strain BNC1).